The chain runs to 308 residues: Acetyl-coenzyme A carboxylase carboxyl transferase subunit beta 1 (308 aa).

The 270-residue stretch at 25 to 294 folds into the CoA carboxyltransferase N-terminal domain; that stretch reads VWTKCTSCEQ…PMVVSVNESP (270 aa). Zn(2+) contacts are provided by Cys29, Cys32, Cys48, and Cys51. The segment at 29-51 adopts a C4-type zinc-finger fold; sequence CTSCEQVLYHAELERNLEVCPKC. Residues 289 to 308 form a disordered region; it reads SVNESPNEEPYSVPEADEKG.

It belongs to the AccD/PCCB family. Acetyl-CoA carboxylase is a heterohexamer composed of biotin carboxyl carrier protein (AccB), biotin carboxylase (AccC) and two subunits each of ACCase subunit alpha (AccA) and ACCase subunit beta (AccD). Zn(2+) is required as a cofactor.

The protein localises to the cytoplasm. The catalysed reaction is N(6)-carboxybiotinyl-L-lysyl-[protein] + acetyl-CoA = N(6)-biotinyl-L-lysyl-[protein] + malonyl-CoA. It participates in lipid metabolism; malonyl-CoA biosynthesis; malonyl-CoA from acetyl-CoA: step 1/1. Component of the acetyl coenzyme A carboxylase (ACC) complex. Biotin carboxylase (BC) catalyzes the carboxylation of biotin on its carrier protein (BCCP) and then the CO(2) group is transferred by the transcarboxylase to acetyl-CoA to form malonyl-CoA. This Vibrio campbellii (strain ATCC BAA-1116) protein is Acetyl-coenzyme A carboxylase carboxyl transferase subunit beta 1.